Consider the following 374-residue polypeptide: N5-carboxyaminoimidazole ribonucleotide synthase (374 aa).

ATP-binding positions include Arg108, Lys148, 153 to 159, 183 to 186, Glu191, His214, and 266 to 267; these read GYDGKGQ, EKYL, and NE. The ATP-grasp domain occupies 112-296; sequence KETLKSAGTK…QFDTHILAVT (185 aa).

It belongs to the PurK/PurT family. Homodimer.

It catalyses the reaction 5-amino-1-(5-phospho-beta-D-ribosyl)imidazole + hydrogencarbonate + ATP = 5-carboxyamino-1-(5-phospho-D-ribosyl)imidazole + ADP + phosphate + 2 H(+). The protein operates within purine metabolism; IMP biosynthesis via de novo pathway; 5-amino-1-(5-phospho-D-ribosyl)imidazole-4-carboxylate from 5-amino-1-(5-phospho-D-ribosyl)imidazole (N5-CAIR route): step 1/2. Functionally, catalyzes the ATP-dependent conversion of 5-aminoimidazole ribonucleotide (AIR) and HCO(3)(-) to N5-carboxyaminoimidazole ribonucleotide (N5-CAIR). The polypeptide is N5-carboxyaminoimidazole ribonucleotide synthase (Staphylococcus aureus (strain Mu50 / ATCC 700699)).